The sequence spans 552 residues: 5'-AMP-activated protein kinase catalytic subunit alpha-2 (552 aa).

Residues 16-268 (YVLGDTLGVG…IKDIREHEWF (253 aa)) form the Protein kinase domain. ATP-binding positions include 22-30 (LGVGTFGKV) and Lys-45. Asp-139 serves as the catalytic Proton acceptor. Position 172 is a phosphothreonine; by LKB1 and CaMKK2 (Thr-172). Residue Thr-258 is modified to Phosphothreonine. Residues 291 to 376 (EAVKEVCEKF…PERMPPLIAD (86 aa)) form an AIS region. Phosphoserine is present on residues Ser-377 and Ser-491.

Belongs to the protein kinase superfamily. CAMK Ser/Thr protein kinase family. SNF1 subfamily. In terms of assembly, AMPK is a heterotrimer of an alpha catalytic subunit (PRKAA1 or PRKAA2), a beta (PRKAB1 or PRKAB2) and a gamma non-catalytic subunits (PRKAG1, PRKAG2 or PRKAG3). Interacts with FNIP1 and FNIP2. Interacts with DUSP29. Interacts with ARF6. The phosphorylated form at Thr-172 mediated by CamKK2 interacts with ACSS2. Requires Mg(2+) as cofactor. Ubiquitinated. Post-translationally, phosphorylated at Thr-172 by STK11/LKB1 in complex with STE20-related adapter-alpha (STRADA) pseudo kinase and CAB39. Also phosphorylated at Thr-172 by CAMKK2; triggered by a rise in intracellular calcium ions, without detectable changes in the AMP/ATP ratio. CAMKK1 can also phosphorylate Thr-172, but at much lower level. Dephosphorylated by protein phosphatase 2A and 2C (PP2A and PP2C). Phosphorylated by ULK1; leading to negatively regulate AMPK activity and suggesting the existence of a regulatory feedback loop between ULK1 and AMPK. Dephosphorylated by PPM1A and PPM1B at Thr-172 (mediated by STK11/LKB1).

It is found in the cytoplasm. The protein localises to the nucleus. The enzyme catalyses L-seryl-[protein] + ATP = O-phospho-L-seryl-[protein] + ADP + H(+). It carries out the reaction L-threonyl-[protein] + ATP = O-phospho-L-threonyl-[protein] + ADP + H(+). It catalyses the reaction L-seryl-[acetyl-CoA carboxylase] + ATP = O-phospho-L-seryl-[acetyl-CoA carboxylase] + ADP + H(+). The catalysed reaction is L-seryl-[3-hydroxy-3-methylglutaryl-coenzyme A reductase] + ATP = O-phospho-L-seryl-[3-hydroxy-3-methylglutaryl-coenzyme A reductase] + ADP + H(+). Activated by phosphorylation on Thr-172. Binding of AMP to non-catalytic gamma subunit (PRKAG1, PRKAG2 or PRKAG3) results in allosteric activation, inducing phosphorylation on Thr-172. AMP-binding to gamma subunit also sustains activity by preventing dephosphorylation of Thr-172. ADP also stimulates Thr-172 phosphorylation, without stimulating already phosphorylated AMPK. ATP promotes dephosphorylation of Thr-172, rendering the enzyme inactive. Under physiological conditions AMPK mainly exists in its inactive form in complex with ATP, which is much more abundant than AMP. Selectively inhibited by compound C (6-[4-(2-Piperidin-1-yl-ethoxy)-phenyl)]-3-pyridin-4-yl-pyyrazolo[1,5-a] pyrimidine. Activated by resveratrol, a natural polyphenol present in red wine, and S17834, a synthetic polyphenol. Salicylate/aspirin directly activates kinase activity, primarily by inhibiting Thr-172 dephosphorylation. Functionally, catalytic subunit of AMP-activated protein kinase (AMPK), an energy sensor protein kinase that plays a key role in regulating cellular energy metabolism. In response to reduction of intracellular ATP levels, AMPK activates energy-producing pathways and inhibits energy-consuming processes: inhibits protein, carbohydrate and lipid biosynthesis, as well as cell growth and proliferation. AMPK acts via direct phosphorylation of metabolic enzymes, and by longer-term effects via phosphorylation of transcription regulators. Regulates lipid synthesis by phosphorylating and inactivating lipid metabolic enzymes such as ACACA, ACACB, GYS1, HMGCR and LIPE; regulates fatty acid and cholesterol synthesis by phosphorylating acetyl-CoA carboxylase (ACACA and ACACB) and hormone-sensitive lipase (LIPE) enzymes, respectively. Promotes lipolysis of lipid droplets by mediating phosphorylation of isoform 1 of CHKA (CHKalpha2). Regulates insulin-signaling and glycolysis by phosphorylating IRS1, PFKFB2 and PFKFB3. Involved in insulin receptor/INSR internalization. AMPK stimulates glucose uptake in muscle by increasing the translocation of the glucose transporter SLC2A4/GLUT4 to the plasma membrane, possibly by mediating phosphorylation of TBC1D4/AS160. Regulates transcription and chromatin structure by phosphorylating transcription regulators involved in energy metabolism such as CRTC2/TORC2, FOXO3, histone H2B, HDAC5, MEF2C, MLXIPL/ChREBP, EP300, HNF4A, p53/TP53, SREBF1, SREBF2 and PPARGC1A. Acts as a key regulator of glucose homeostasis in liver by phosphorylating CRTC2/TORC2, leading to CRTC2/TORC2 sequestration in the cytoplasm. In response to stress, phosphorylates 'Ser-36' of histone H2B (H2BS36ph), leading to promote transcription. Acts as a key regulator of cell growth and proliferation by phosphorylating FNIP1, TSC2, RPTOR, WDR24 and ATG1/ULK1: in response to nutrient limitation, negatively regulates the mTORC1 complex by phosphorylating RPTOR component of the mTORC1 complex and by phosphorylating and activating TSC2. Also phosphorylates and inhibits GATOR2 subunit WDR24 in response to nutrient limitation, leading to suppress glucose-mediated mTORC1 activation. In response to energetic stress, phosphorylates FNIP1, inactivating the non-canonical mTORC1 signaling, thereby promoting nuclear translocation of TFEB and TFE3, and inducing transcription of lysosomal or autophagy genes. In response to nutrient limitation, promotes autophagy by phosphorylating and activating ATG1/ULK1. In that process, it also activates WDR45/WIPI4. Phosphorylates CASP6, thereby preventing its autoprocessing and subsequent activation. AMPK also acts as a regulator of circadian rhythm by mediating phosphorylation of CRY1, leading to destabilize it. May regulate the Wnt signaling pathway by phosphorylating CTNNB1, leading to stabilize it. Also acts as a regulator of cellular polarity by remodeling the actin cytoskeleton; probably by indirectly activating myosin. Also phosphorylates CFTR, EEF2K, KLC1, NOS3 and SLC12A1. Plays an important role in the differential regulation of pro-autophagy (composed of PIK3C3, BECN1, PIK3R4 and UVRAG or ATG14) and non-autophagy (composed of PIK3C3, BECN1 and PIK3R4) complexes, in response to glucose starvation. Can inhibit the non-autophagy complex by phosphorylating PIK3C3 and can activate the pro-autophagy complex by phosphorylating BECN1. Upon glucose starvation, promotes ARF6 activation in a kinase-independent manner leading to cell migration. Upon glucose deprivation mediates the phosphorylation of ACSS2 at 'Ser-659', which exposes the nuclear localization signal of ACSS2, required for its interaction with KPNA1 and nuclear translocation. Upon stress, regulates mitochondrial fragmentation through phosphorylation of MTFR1L. In Mus musculus (Mouse), this protein is 5'-AMP-activated protein kinase catalytic subunit alpha-2.